Consider the following 423-residue polypeptide: MLDPKILRQNLEHVVEKLRRRGFEMDSDTFLQLENKRKEAQLAIQSFQTKRNQLSKTIGMAKSKGENPELLMAEVSQLNDELKQEEANFETIQKAFSDFQLAIPNLPHDSVPDGKSENDNREIRQWGAPPGFDFTPKDHTVLGERDNQLDFEAAAKLSGARFVVLRGSLARAHRALAQFMLDLHTDQHGYEEVYVPYLVHEECLYGTGQLPKFREEQFQVAGDRNFFLVPTGEVPLVNLARDEIIEAPALPKKWVAQTPCFRSEAGSYGKDVRGMIRQHQFQKVELVQLVQPENSYQALEEITRQAEKVLQLLALPYRVVELCAGDLGFAAAKTYDLEVWLPSQNKYREISSCSNCEDFQARRIQARWRNPKTGKPELLHTLNGSGLAVGRTLVAVMENYQQADGHIRVPDALKSYMGGVDYF.

231–233 is an L-serine binding site; that stretch reads TGE. 262 to 264 serves as a coordination point for ATP; sequence RSE. Glu-285 provides a ligand contact to L-serine. Residue 349 to 352 coordinates ATP; the sequence is EISS. Residue Ser-385 coordinates L-serine.

Belongs to the class-II aminoacyl-tRNA synthetase family. Type-1 seryl-tRNA synthetase subfamily. In terms of assembly, homodimer. The tRNA molecule binds across the dimer.

The protein localises to the cytoplasm. The enzyme catalyses tRNA(Ser) + L-serine + ATP = L-seryl-tRNA(Ser) + AMP + diphosphate + H(+). The catalysed reaction is tRNA(Sec) + L-serine + ATP = L-seryl-tRNA(Sec) + AMP + diphosphate + H(+). It functions in the pathway aminoacyl-tRNA biosynthesis; selenocysteinyl-tRNA(Sec) biosynthesis; L-seryl-tRNA(Sec) from L-serine and tRNA(Sec): step 1/1. Functionally, catalyzes the attachment of serine to tRNA(Ser). Is also able to aminoacylate tRNA(Sec) with serine, to form the misacylated tRNA L-seryl-tRNA(Sec), which will be further converted into selenocysteinyl-tRNA(Sec). This Coxiella burnetii (strain RSA 331 / Henzerling II) protein is Serine--tRNA ligase.